A 313-amino-acid chain; its full sequence is Myeloma-overexpressed gene protein (313 aa).

Residues 107 to 129 (ERNKGDKGAQTGAGLSQEAEDVD) form a disordered region.

The protein is Myeloma-overexpressed gene protein (MYEOV) of Homo sapiens (Human).